Consider the following 37-residue polypeptide: Potassium channel toxin alpha-KTx 2.14 (37 aa).

3 disulfides stabilise this stretch: Cys-7–Cys-28, Cys-13–Cys-33, and Cys-17–Cys-35.

Belongs to the short scorpion toxin superfamily. Potassium channel inhibitor family. Alpha-KTx 02 subfamily. In terms of tissue distribution, expressed by the venom gland.

Its subcellular location is the secreted. In terms of biological role, reversibly blocks hKv1.1/KCNA1 (50% inhibition of current at 1 uM). Seems not to be voltage-dependent. The sequence is that of Potassium channel toxin alpha-KTx 2.14 from Heteroctenus garridoi (Cuban scorpion).